The following is a 178-amino-acid chain: Dual-action ribosomal maturation protein DarP (178 aa).

The protein belongs to the DarP family.

It localises to the cytoplasm. In terms of biological role, member of a network of 50S ribosomal subunit biogenesis factors which assembles along the 30S-50S interface, preventing incorrect 23S rRNA structures from forming. Promotes peptidyl transferase center (PTC) maturation. This Haemophilus influenzae (strain PittEE) protein is Dual-action ribosomal maturation protein DarP.